The sequence spans 2213 residues: Protein sidekick-1 (2213 aa).

Residues Met-1 to Ala-73 form a disordered region. Positions Ala-23–Pro-38 are enriched in low complexity. Ig-like C2-type domains follow at residues Pro-104–Gln-186, Gly-191–Ile-277, Pro-293–Ala-378, Pro-386–Thr-476, and Pro-480–Thr-569. Cysteines 126 and 169 form a disulfide. N-linked (GlcNAc...) asparagine glycosylation is found at Asn-271 and Asn-301. 3 cysteine pairs are disulfide-bonded: Cys-315–Cys-362, Cys-408–Cys-458, and Cys-501–Cys-553. 3 N-linked (GlcNAc...) asparagine glycosylation sites follow: Asn-550, Asn-563, and Asn-572. The region spanning Thr-574–Glu-663 is the Ig-like C2-type 6 domain. A disulfide bridge connects residues Cys-595 and Cys-647. 7 N-linked (GlcNAc...) asparagine glycosylation sites follow: Asn-655, Asn-679, Asn-782, Asn-821, Asn-882, Asn-1015, and Asn-1024. 13 consecutive Fibronectin type-III domains span residues Ser-670 to Glu-766, Pro-771 to Gly-867, Pro-872 to Asp-970, Ala-974 to Asp-1068, Ala-1072 to Ala-1171, Ala-1176 to Ser-1274, Ala-1279 to Asp-1376, Pro-1380 to Arg-1474, Pro-1479 to Asp-1576, Pro-1581 to Ala-1699, Ala-1704 to Ala-1800, Ala-1804 to Ala-1899, and Ser-1902 to Val-2000. 2 N-linked (GlcNAc...) asparagine glycosylation sites follow: Asn-1282 and Asn-1333. 5 N-linked (GlcNAc...) asparagine glycosylation sites follow: Asn-1654, Asn-1748, Asn-1767, Asn-1819, and Asn-1893. Residues Phe-2010 to Val-2030 form a helical membrane-spanning segment. Residues Leu-2031 to Val-2213 lie on the Cytoplasmic side of the membrane. The tract at residues Ser-2075–Asp-2098 is disordered. Positions Thr-2207–Val-2213 match the PDZ-binding motif.

This sequence belongs to the sidekick family. As to quaternary structure, homodimer; mediates homophilic interactions to promote cell adhesion. In terms of tissue distribution, up-regulated in glomeruli in HIV-associated nephropathy. In diseased glomeruli, significantly overexpressed and the expression is no longer restricted to mesangial cells but includes podocytes and parietal epithelial cells.

It localises to the cell membrane. Its subcellular location is the synapse. Its function is as follows. Adhesion molecule that promotes lamina-specific synaptic connections in the retina. Expressed in specific subsets of interneurons and retinal ganglion cells (RGCs) and promotes synaptic connectivity via homophilic interactions. This chain is Protein sidekick-1, found in Homo sapiens (Human).